The chain runs to 157 residues: Protein Smg homolog (157 aa).

The protein belongs to the Smg family.

The sequence is that of Protein Smg homolog from Xanthomonas campestris pv. campestris (strain 8004).